A 343-amino-acid polypeptide reads, in one-letter code: Aspartate-semialdehyde dehydrogenase (343 aa).

Residue 11–14 participates in NADP(+) binding; that stretch reads TGMV. R109 serves as a coordination point for phosphate. The Acyl-thioester intermediate role is filled by C148. A substrate-binding site is contributed by Q174. 177–178 serves as a coordination point for NADP(+); it reads SG. Substrate is bound at residue E200. K203 lines the phosphate pocket. Residue R233 coordinates substrate. H240 (proton acceptor) is an active-site residue. Position 321–322 (321–322) interacts with NADP(+); it reads NT.

The protein belongs to the aspartate-semialdehyde dehydrogenase family. Homodimer.

It catalyses the reaction L-aspartate 4-semialdehyde + phosphate + NADP(+) = 4-phospho-L-aspartate + NADPH + H(+). Its pathway is amino-acid biosynthesis; L-lysine biosynthesis via DAP pathway; (S)-tetrahydrodipicolinate from L-aspartate: step 2/4. It functions in the pathway amino-acid biosynthesis; L-methionine biosynthesis via de novo pathway; L-homoserine from L-aspartate: step 2/3. It participates in amino-acid biosynthesis; L-threonine biosynthesis; L-threonine from L-aspartate: step 2/5. In terms of biological role, catalyzes the NADPH-dependent formation of L-aspartate-semialdehyde (L-ASA) by the reductive dephosphorylation of L-aspartyl-4-phosphate. This chain is Aspartate-semialdehyde dehydrogenase, found in Archaeoglobus fulgidus (strain ATCC 49558 / DSM 4304 / JCM 9628 / NBRC 100126 / VC-16).